The primary structure comprises 1147 residues: Cellulose synthase-like protein D3 (1147 aa).

Disordered stretches follow at residues 1–33 (MSTG…PAGQ) and 259–281 (KLGG…PFKP). 2 stretches are compositionally biased toward gly residues: residues 14–29 (GGVG…GPRG) and 262–272 (GDGGGGGGGGP). Helical transmembrane passes span 292–312 (VISP…FYLT) and 322–342 (ALWL…SWLL). Catalysis depends on residues Asp-422 and Asp-847. 6 helical membrane passes run 929-949 (IFLL…FFIV), 954-974 (IAFL…GILE), 1001-1021 (LYAV…SFTL), 1045-1065 (LLIP…FAFA), 1075-1095 (WGKF…LNPF), and 1108-1128 (TIVF…WVAI).

This sequence belongs to the glycosyltransferase 2 family. Plant cellulose synthase-like D subfamily.

Its subcellular location is the golgi apparatus membrane. Functionally, thought to be a Golgi-localized beta-glycan synthase that polymerize the backbones of noncellulosic polysaccharides (hemicelluloses) of plant cell wall. The sequence is that of Cellulose synthase-like protein D3 (CSLD3) from Oryza sativa subsp. japonica (Rice).